Here is a 360-residue protein sequence, read N- to C-terminus: Probable arginine kinase ZC434.8 (360 aa).

The region spanning serine 10–asparagine 92 is the Phosphagen kinase N-terminal domain. A substrate-binding site is contributed by glycine 65–tyrosine 69. In terms of domain architecture, Phosphagen kinase C-terminal spans phenylalanine 122–alanine 359. ATP contacts are provided by residues serine 125 to arginine 129 and histidine 189. Glutamate 229 provides a ligand contact to substrate. Residue arginine 233 coordinates ATP. Cysteine 275 is a binding site for substrate. ATP contacts are provided by residues arginine 284–histidine 288, arginine 312–glutamate 317, and aspartate 327. Residue glutamate 317 participates in substrate binding.

It belongs to the ATP:guanido phosphotransferase family.

It catalyses the reaction L-arginine + ATP = N(omega)-phospho-L-arginine + ADP + H(+). This is Probable arginine kinase ZC434.8 from Caenorhabditis elegans.